The primary structure comprises 420 residues: Probable protein phosphatase 2C 76 (420 aa).

The PPM-type phosphatase domain occupies 101–347 (SCGYCSFRGK…DNITCIVVKF (247 aa)). Mn(2+) is bound by residues D137, G138, D299, and D338. The segment at 353 to 420 (ESPKIETNAM…PETKGEKAGE (68 aa)) is disordered. The span at 403-420 (PDPKPETEPETKGEKAGE) shows a compositional bias: basic and acidic residues.

It belongs to the PP2C family. The cofactor is Mg(2+). Mn(2+) serves as cofactor.

It carries out the reaction O-phospho-L-seryl-[protein] + H2O = L-seryl-[protein] + phosphate. It catalyses the reaction O-phospho-L-threonyl-[protein] + H2O = L-threonyl-[protein] + phosphate. The chain is Probable protein phosphatase 2C 76 from Arabidopsis thaliana (Mouse-ear cress).